A 20-amino-acid polypeptide reads, in one-letter code: Serum amyloid P-component (20 aa).

A Pentraxin (PTX) domain is found at 1-20 (ZPIDLMGKVFVFDKELSPBI).

It belongs to the pentraxin family. As to quaternary structure, homopentamer. Pentraxin (or pentaxin) have a discoid arrangement of 5 non-covalently bound subunits.

It localises to the secreted. The polypeptide is Serum amyloid P-component (Pleuronectes platessa (European plaice)).